A 504-amino-acid chain; its full sequence is Glycerol kinase (504 aa).

Residue T14 participates in ADP binding. ATP-binding residues include T14, T15, and S16. T14 provides a ligand contact to sn-glycerol 3-phosphate. An ADP-binding site is contributed by R18. Sn-glycerol 3-phosphate-binding residues include R84, E85, and Y136. Positions 84, 85, and 136 each coordinate glycerol. H232 carries the post-translational modification Phosphohistidine; by HPr. D246 contributes to the sn-glycerol 3-phosphate binding site. Residues D246 and Q247 each contribute to the glycerol site. Positions 268 and 311 each coordinate ADP. Residues T268, G311, Q315, and G412 each contribute to the ATP site. ADP is bound by residues G412 and N416.

It belongs to the FGGY kinase family. Homotetramer and homodimer (in equilibrium). In terms of processing, the phosphoenolpyruvate-dependent sugar phosphotransferase system (PTS), including enzyme I, and histidine-containing protein (HPr) are required for the phosphorylation, which leads to the activation of the enzyme.

The catalysed reaction is glycerol + ATP = sn-glycerol 3-phosphate + ADP + H(+). Its pathway is polyol metabolism; glycerol degradation via glycerol kinase pathway; sn-glycerol 3-phosphate from glycerol: step 1/1. Its activity is regulated as follows. Activated by phosphorylation and inhibited by fructose 1,6-bisphosphate (FBP). Key enzyme in the regulation of glycerol uptake and metabolism. Catalyzes the phosphorylation of glycerol to yield sn-glycerol 3-phosphate. This is Glycerol kinase from Streptococcus pyogenes serotype M6 (strain ATCC BAA-946 / MGAS10394).